A 165-amino-acid polypeptide reads, in one-letter code: Ribosome maturation factor RimM (165 aa).

The 72-residue stretch at 90–161 (PDTYYVSDLK…KIIIKPVGEW (72 aa)) folds into the PRC barrel domain.

The protein belongs to the RimM family. In terms of assembly, binds ribosomal protein uS19.

It localises to the cytoplasm. An accessory protein needed during the final step in the assembly of 30S ribosomal subunit, possibly for assembly of the head region. Essential for efficient processing of 16S rRNA. May be needed both before and after RbfA during the maturation of 16S rRNA. It has affinity for free ribosomal 30S subunits but not for 70S ribosomes. The sequence is that of Ribosome maturation factor RimM from Clostridium beijerinckii (strain ATCC 51743 / NCIMB 8052) (Clostridium acetobutylicum).